A 509-amino-acid chain; its full sequence is ATP synthase subunit alpha (509 aa).

169–176 (GDRQTGKT) contacts ATP.

It belongs to the ATPase alpha/beta chains family. As to quaternary structure, F-type ATPases have 2 components, CF(1) - the catalytic core - and CF(0) - the membrane proton channel. CF(1) has five subunits: alpha(3), beta(3), gamma(1), delta(1), epsilon(1). CF(0) has three main subunits: a(1), b(2) and c(9-12). The alpha and beta chains form an alternating ring which encloses part of the gamma chain. CF(1) is attached to CF(0) by a central stalk formed by the gamma and epsilon chains, while a peripheral stalk is formed by the delta and b chains.

The protein localises to the cell inner membrane. It catalyses the reaction ATP + H2O + 4 H(+)(in) = ADP + phosphate + 5 H(+)(out). Functionally, produces ATP from ADP in the presence of a proton gradient across the membrane. The alpha chain is a regulatory subunit. In Brucella ovis (strain ATCC 25840 / 63/290 / NCTC 10512), this protein is ATP synthase subunit alpha.